The primary structure comprises 236 residues: Serine/arginine-rich SC35-like splicing factor SCL28 (236 aa).

2 disordered regions span residues M1 to N53 and E124 to T219. Residues R14–S43 are compositionally biased toward basic and acidic residues. An RRM domain is found at S47–E125. The segment covering T149 to K176 has biased composition (basic residues). A Phosphoserine modification is found at S184. The span at R199–V217 shows a compositional bias: basic and acidic residues.

It belongs to the splicing factor SR family. SCL subfamily. In terms of assembly, component of the spliceosome. Interacts with RS2Z33, CYP59, CYP63 and CYP95.

It is found in the nucleus speckle. In terms of biological role, involved in intron recognition and spliceosome assembly. Probably active at the 5' splice sites. This chain is Serine/arginine-rich SC35-like splicing factor SCL28 (SCL28), found in Arabidopsis thaliana (Mouse-ear cress).